Here is a 175-residue protein sequence, read N- to C-terminus: Epididymal-specific lipocalin-8 (175 aa).

An N-terminal signal peptide occupies residues 1 to 22 (MEARLLSNVCGFFLVFLLQAES). N66 and N74 each carry an N-linked (GlcNAc...) asparagine glycan. A disulfide bridge links C79 with C166.

The protein belongs to the calycin superfamily. Lipocalin family. In terms of tissue distribution, predominantly expressed in epididymis.

It localises to the secreted. In terms of biological role, may play a role in male fertility. May act as a retinoid carrier protein within the epididymis. The protein is Epididymal-specific lipocalin-8 (Lcn8) of Mus musculus (Mouse).